Reading from the N-terminus, the 287-residue chain is mRNA-capping enzyme small subunit (287 aa).

In terms of assembly, heterodimer of a large and a small subunit.

The protein resides in the virion. The enzyme catalyses a 5'-end (5'-triphosphoguanosine)-ribonucleoside in mRNA + S-adenosyl-L-methionine = a 5'-end (N(7)-methyl 5'-triphosphoguanosine)-ribonucleoside in mRNA + S-adenosyl-L-homocysteine. Catalyzes the last reaction in the mRNA cap formation pathway. This chain is mRNA-capping enzyme small subunit, found in Sus scrofa (Pig).